Consider the following 224-residue polypeptide: Ornithine decarboxylase antizyme (224 aa).

The protein belongs to the ODC antizyme family. As to quaternary structure, interacts with ODC and thereby sterically blocks ODC homodimerization.

Ornithine decarboxylase (ODC) antizyme protein that negatively regulates ODC activity and intracellular polyamine biosynthesis in response to increased intracellular polyamine levels. Binds to ODC monomers, inhibiting the assembly of the functional ODC homodimer, and targets the monomers for ubiquitin-independent proteolytic destruction by the 26S proteasome. The sequence is that of Ornithine decarboxylase antizyme (spa1) from Schizosaccharomyces octosporus (Fission yeast).